A 352-amino-acid chain; its full sequence is Phosphoribosylformylglycinamidine cyclo-ligase (352 aa).

This sequence belongs to the AIR synthase family.

The protein localises to the cytoplasm. The enzyme catalyses 2-formamido-N(1)-(5-O-phospho-beta-D-ribosyl)acetamidine + ATP = 5-amino-1-(5-phospho-beta-D-ribosyl)imidazole + ADP + phosphate + H(+). It participates in purine metabolism; IMP biosynthesis via de novo pathway; 5-amino-1-(5-phospho-D-ribosyl)imidazole from N(2)-formyl-N(1)-(5-phospho-D-ribosyl)glycinamide: step 2/2. This chain is Phosphoribosylformylglycinamidine cyclo-ligase, found in Pseudomonas savastanoi pv. phaseolicola (strain 1448A / Race 6) (Pseudomonas syringae pv. phaseolicola (strain 1448A / Race 6)).